Reading from the N-terminus, the 192-residue chain is Cysteine and glycine-rich protein 1 (192 aa).

An LIM zinc-binding 1 domain is found at 10-61; it reads CGVCQKAVYFAEEVQCEGSSFHKSCFLCMVCKKNLDSTTVAVHGDEIYCKSC. The Nuclear localization signal signature appears at 64–69; that stretch reads KKYGPK. Residues 118 to 169 form the LIM zinc-binding 2 domain; sequence CPRCGQAVYAAEKVIGAGKSWHKSCFRCAKCGKSLESTTLADKDGEIYCKGC.

As to quaternary structure, probable monomer. Interacts with ZYX. Most prominent in tissues that are enriched in smooth muscle cells, such as gizzard, stomach, and intestine. Lower level in the heart, no expression in liver, skeletal muscle, or brain.

The protein localises to the nucleus. It localises to the cytoplasm. The protein resides in the cytoskeleton. Its function is as follows. Heat stable protein, that interacts with zyxin/ZYX. May be a component of a signal transduction pathway that mediates adhesion-stimulated changes in gene expression. The sequence is that of Cysteine and glycine-rich protein 1 (CSRP1) from Gallus gallus (Chicken).